The following is a 28-amino-acid chain: Kalata-B12 (28 aa).

Residues 1–28 (GSLCGDTCFVLGCNDSSCSCNYPICVKD) constitute a cross-link (cyclopeptide (Gly-Asp)). 3 cysteine pairs are disulfide-bonded: Cys-4–Cys-18, Cys-8–Cys-20, and Cys-13–Cys-25.

Post-translationally, this is a cyclic peptide.

Probably participates in a plant defense mechanism. The protein is Kalata-B12 of Oldenlandia affinis.